We begin with the raw amino-acid sequence, 356 residues long: tRNA (guanine(26)-N(2))-dimethyltransferase (356 aa).

A Trm1 methyltransferase domain is found at 5 to 352 (VLRREGTVEF…VSAGEVERVL (348 aa)). Arg40, Arg67, Asp85, Asp111, and Ala112 together coordinate S-adenosyl-L-methionine.

It belongs to the class I-like SAM-binding methyltransferase superfamily. Trm1 family.

The enzyme catalyses guanosine(26) in tRNA + 2 S-adenosyl-L-methionine = N(2)-dimethylguanosine(26) in tRNA + 2 S-adenosyl-L-homocysteine + 2 H(+). Its function is as follows. Dimethylates a single guanine residue at position 26 of a number of tRNAs using S-adenosyl-L-methionine as donor of the methyl groups. The protein is tRNA (guanine(26)-N(2))-dimethyltransferase of Pyrobaculum arsenaticum (strain DSM 13514 / JCM 11321 / PZ6).